The following is a 572-amino-acid chain: MFS-type transporter pydD (572 aa).

Residues Met1–Ser15 show a composition bias toward basic and acidic residues. Residues Met1–Asn46 are disordered. An N-linked (GlcNAc...) asparagine glycan is attached at Asn23. Residues Ser29–Ser39 are compositionally biased toward low complexity. The next 8 membrane-spanning stretches (helical) occupy residues Phe56–Ile76, Leu88–Met108, Trp123–Thr143, Gly156–Leu176, Ile185–Val205, Trp212–Leu232, Ala255–Tyr275, and Val282–Ser302. Residue Asn317 is glycosylated (N-linked (GlcNAc...) asparagine). A run of 6 helical transmembrane segments spans residues Val321–Met341, Val358–Met378, Pro386–Asp406, Ile419–Pro439, Thr451–Phe471, and Trp529–Val549.

Belongs to the major facilitator superfamily.

The protein localises to the membrane. MFS-type transporter; part of the gene cluster that mediates the biosynthesis of pyrrocidines, fungal natural products containing a macrocyclic para-cyclophane connected to a decahydrofluorene ring system that show potent antibiotic activities toward Gram-negative bacteria. This chain is MFS-type transporter pydD, found in Acremonium sp.